A 270-amino-acid chain; its full sequence is Putative methylsterol monooxygenase DDB_G0269788 (270 aa).

3 helical membrane-spanning segments follow: residues 31–51 (FIAH…CDFM), 82–102 (IFVQ…IGLS), and 110–130 (IPYL…YFYW). A Fatty acid hydroxylase domain is found at 118 to 249 (ACCFLIEDFY…FTYLDKIFGT (132 aa)). The Histidine box-1 motif lies at 132–136 (HRALH). The short motif at 145-149 (HKVHH) is the Histidine box-2 element. The short motif at 224–230 (FHDFHHE) is the Histidine box-3 element.

The protein belongs to the sterol desaturase family. The cofactor is Fe cation.

The protein localises to the endoplasmic reticulum membrane. The catalysed reaction is 4,4-dimethyl-5alpha-cholest-7-en-3beta-ol + 6 Fe(II)-[cytochrome b5] + 3 O2 + 5 H(+) = 4alpha-carboxy-4beta-methyl-5alpha-cholest-7-ene-3beta-ol + 6 Fe(III)-[cytochrome b5] + 4 H2O. It participates in steroid biosynthesis; zymosterol biosynthesis; zymosterol from lanosterol: step 3/6. The chain is Putative methylsterol monooxygenase DDB_G0269788 from Dictyostelium discoideum (Social amoeba).